A 241-amino-acid polypeptide reads, in one-letter code: Phosphoribosylaminoimidazole-succinocarboxamide synthase (241 aa).

This sequence belongs to the SAICAR synthetase family.

It carries out the reaction 5-amino-1-(5-phospho-D-ribosyl)imidazole-4-carboxylate + L-aspartate + ATP = (2S)-2-[5-amino-1-(5-phospho-beta-D-ribosyl)imidazole-4-carboxamido]succinate + ADP + phosphate + 2 H(+). Its pathway is purine metabolism; IMP biosynthesis via de novo pathway; 5-amino-1-(5-phospho-D-ribosyl)imidazole-4-carboxamide from 5-amino-1-(5-phospho-D-ribosyl)imidazole-4-carboxylate: step 1/2. The sequence is that of Phosphoribosylaminoimidazole-succinocarboxamide synthase from Lacticaseibacillus casei (strain BL23) (Lactobacillus casei).